Here is a 294-residue protein sequence, read N- to C-terminus: 4-hydroxy-tetrahydrodipicolinate synthase (294 aa).

Residue threonine 45 participates in pyruvate binding. The active-site Proton donor/acceptor is the tyrosine 133. The active-site Schiff-base intermediate with substrate is lysine 162. Isoleucine 204 is a pyruvate binding site.

The protein belongs to the DapA family. As to quaternary structure, homotetramer; dimer of dimers.

It localises to the cytoplasm. It catalyses the reaction L-aspartate 4-semialdehyde + pyruvate = (2S,4S)-4-hydroxy-2,3,4,5-tetrahydrodipicolinate + H2O + H(+). The protein operates within amino-acid biosynthesis; L-lysine biosynthesis via DAP pathway; (S)-tetrahydrodipicolinate from L-aspartate: step 3/4. In terms of biological role, catalyzes the condensation of (S)-aspartate-beta-semialdehyde [(S)-ASA] and pyruvate to 4-hydroxy-tetrahydrodipicolinate (HTPA). The chain is 4-hydroxy-tetrahydrodipicolinate synthase from Bartonella henselae (strain ATCC 49882 / DSM 28221 / CCUG 30454 / Houston 1) (Rochalimaea henselae).